Here is a 466-residue protein sequence, read N- to C-terminus: A-type ATP synthase subunit B (466 aa).

Belongs to the ATPase alpha/beta chains family. Has multiple subunits with at least A(3), B(3), C, D, E, F, H, I and proteolipid K(x).

It localises to the cell membrane. Functionally, component of the A-type ATP synthase that produces ATP from ADP in the presence of a proton gradient across the membrane. The B chain is a regulatory subunit. The polypeptide is A-type ATP synthase subunit B (Sulfolobus acidocaldarius (strain ATCC 33909 / DSM 639 / JCM 8929 / NBRC 15157 / NCIMB 11770)).